The sequence spans 567 residues: Asparagine--tRNA ligase, chloroplastic/mitochondrial (567 aa).

The OB DNA-binding region spans Asn113–Val191.

Belongs to the class-II aminoacyl-tRNA synthetase family.

Its subcellular location is the plastid. It localises to the chloroplast. It is found in the mitochondrion. It catalyses the reaction tRNA(Asn) + L-asparagine + ATP = L-asparaginyl-tRNA(Asn) + AMP + diphosphate + H(+). This chain is Asparagine--tRNA ligase, chloroplastic/mitochondrial, found in Arabidopsis thaliana (Mouse-ear cress).